Here is a 453-residue protein sequence, read N- to C-terminus: Aldehyde dehydrogenase, dimeric NADP-preferring (453 aa).

Serine 2 carries the N-acetylserine modification. Residue lysine 178 is modified to N6-acetyllysine. NAD(+) is bound at residue 188 to 193 (GSTAVG). Lysine 194 is subject to N6-acetyllysine. Active-site residues include glutamate 210 and cysteine 244.

This sequence belongs to the aldehyde dehydrogenase family. Homodimer. As to expression, constitutively expressed in cornea, stomach, skin, bladder and lungs. Lowest expression levels in lungs and bladder.

It is found in the cytoplasm. It catalyses the reaction an aldehyde + NAD(+) + H2O = a carboxylate + NADH + 2 H(+). The catalysed reaction is octanal + NAD(+) + H2O = octanoate + NADH + 2 H(+). In terms of biological role, ALDHs play a major role in the detoxification of alcohol-derived acetaldehyde. They are involved in the metabolism of corticosteroids, biogenic amines, neurotransmitters, and lipid peroxidation. Oxidizes medium and long chain aldehydes into non-toxic fatty acids. Preferentially oxidizes aromatic aldehyde substrates. Comprises about 50 percent of corneal epithelial soluble proteins. May play a role in preventing corneal damage caused by ultraviolet light. This Mus musculus (Mouse) protein is Aldehyde dehydrogenase, dimeric NADP-preferring (Aldh3a1).